The primary structure comprises 381 residues: Protein COS1 (381 aa).

At 1-42 (MKENELKNEKSVDVLSFKQLESQKIVLPQDLFRSSFTWFCYE) the chain is on the cytoplasmic side. The helical transmembrane segment at 43-63 (IYKSLAFRIWMLLWLPLSVWW) threads the bilayer. Over 64-72 (KLSNNCIYP) the chain is Extracellular. Residues 73 to 93 (LIVSLLVLFLGPIFVLVICGL) traverse the membrane as a helical segment. Topologically, residues 94-231 (SRKRSLSKQL…YRFKLTWFLK (138 aa)) are cytoplasmic. The chain crosses the membrane as a helical span at residues 232-252 (RISNIFMLIPFLNFLCCIYVS). Over 253–254 (RG) the chain is Extracellular. Residues 255–275 (MCLLLRTFYLGWILFMLVQGF) form a helical membrane-spanning segment. At 276 to 381 (QNMRMIVLSV…QLSCSEESLA (106 aa)) the chain is on the cytoplasmic side.

Belongs to the DUP/COS family.

It localises to the membrane. The protein is Protein COS1 (COS1) of Saccharomyces cerevisiae (strain ATCC 204508 / S288c) (Baker's yeast).